The chain runs to 521 residues: GMP synthase [glutamine-hydrolyzing] (521 aa).

The 199-residue stretch at 5–203 folds into the Glutamine amidotransferase type-1 domain; the sequence is KILILDFGSQ…VHEICGCGRD (199 aa). Catalysis depends on C82, which acts as the Nucleophile. Active-site residues include H177 and E179. The 193-residue stretch at 204–396 folds into the GMPS ATP-PPase domain; it reads WNMPDYVNEA…LGLPHEMVYR (193 aa). 231-237 is an ATP binding site; it reads SGGVDSS.

As to quaternary structure, homodimer.

It catalyses the reaction XMP + L-glutamine + ATP + H2O = GMP + L-glutamate + AMP + diphosphate + 2 H(+). It functions in the pathway purine metabolism; GMP biosynthesis; GMP from XMP (L-Gln route): step 1/1. Catalyzes the synthesis of GMP from XMP. In Aromatoleum aromaticum (strain DSM 19018 / LMG 30748 / EbN1) (Azoarcus sp. (strain EbN1)), this protein is GMP synthase [glutamine-hydrolyzing].